A 384-amino-acid chain; its full sequence is S-adenosylmethionine synthase (384 aa).

His15 contributes to the ATP binding site. Asp17 serves as a coordination point for Mg(2+). A K(+)-binding site is contributed by Glu43. L-methionine is bound by residues Glu56 and Gln99. Residues 99 to 109 (QSPDINQGVDR) are flexible loop. ATP-binding positions include 164 to 166 (DAK), 231 to 232 (RF), Asp240, 246 to 247 (RK), Ala263, and Lys267. Position 240 (Asp240) interacts with L-methionine. Lys271 contributes to the L-methionine binding site.

Belongs to the AdoMet synthase family. In terms of assembly, homotetramer; dimer of dimers. Mg(2+) is required as a cofactor. Requires K(+) as cofactor.

Its subcellular location is the cytoplasm. The catalysed reaction is L-methionine + ATP + H2O = S-adenosyl-L-methionine + phosphate + diphosphate. It functions in the pathway amino-acid biosynthesis; S-adenosyl-L-methionine biosynthesis; S-adenosyl-L-methionine from L-methionine: step 1/1. In terms of biological role, catalyzes the formation of S-adenosylmethionine (AdoMet) from methionine and ATP. The overall synthetic reaction is composed of two sequential steps, AdoMet formation and the subsequent tripolyphosphate hydrolysis which occurs prior to release of AdoMet from the enzyme. The chain is S-adenosylmethionine synthase from Shewanella halifaxensis (strain HAW-EB4).